The primary structure comprises 360 residues: MFVDSVEIIIASGKGGPGMVSFRREKFVIKGGPDGGDGGDGGDVYFEVDNNTDTLASFRGTKHHKAKNGAPGGTRNCAGKKGEDKIIVVPPGTQVFVGDELWLDLVEPKERVLALKGGKGGLGNAHFKSATKQQPTYAQKGLEGVEKCVRLELKLIADIGLVGFPNAGKSTLISTISNAKPKIANYEFTTLVPNLGVVSVDEKSGFLMADIPGIIEGASEGKGLGISFLKHIERTKVLAFVLDASRLDLGIKEQYQRLRLELEKFSSALANKPFGVLLNKCDVVENIDEMTKDFCAFLNLGAQKLNEFGLEPYLGFLHPHLTNDFENNPNEQSALFVLPLSAVSALNVHALKFVLLEALP.

Positions 1–156 (MFVDSVEIII…KCVRLELKLI (156 aa)) constitute an Obg domain. The region spanning 157-360 (ADIGLVGFPN…LKFVLLEALP (204 aa)) is the OBG-type G domain. GTP contacts are provided by residues 163–170 (GFPNAGKS), 188–192 (FTTLV), 210–213 (DIPG), 279–282 (NKCD), and 341–343 (SAV). Mg(2+) contacts are provided by S170 and T190.

This sequence belongs to the TRAFAC class OBG-HflX-like GTPase superfamily. OBG GTPase family. In terms of assembly, monomer. Requires Mg(2+) as cofactor.

It is found in the cytoplasm. Its function is as follows. An essential GTPase which binds GTP, GDP and possibly (p)ppGpp with moderate affinity, with high nucleotide exchange rates and a fairly low GTP hydrolysis rate. Plays a role in control of the cell cycle, stress response, ribosome biogenesis and in those bacteria that undergo differentiation, in morphogenesis control. The polypeptide is GTPase Obg (Helicobacter pylori (strain ATCC 700392 / 26695) (Campylobacter pylori)).